Consider the following 160-residue polypeptide: Transcription antitermination protein NusB (160 aa).

It belongs to the NusB family.

Its function is as follows. Involved in transcription antitermination. Required for transcription of ribosomal RNA (rRNA) genes. Binds specifically to the boxA antiterminator sequence of the ribosomal RNA (rrn) operons. The polypeptide is Transcription antitermination protein NusB (Rhizobium etli (strain ATCC 51251 / DSM 11541 / JCM 21823 / NBRC 15573 / CFN 42)).